The chain runs to 518 residues: Glutamate--cysteine ligase (518 aa).

Belongs to the glutamate--cysteine ligase type 1 family. Type 1 subfamily.

The enzyme catalyses L-cysteine + L-glutamate + ATP = gamma-L-glutamyl-L-cysteine + ADP + phosphate + H(+). It participates in sulfur metabolism; glutathione biosynthesis; glutathione from L-cysteine and L-glutamate: step 1/2. The sequence is that of Glutamate--cysteine ligase from Escherichia coli O139:H28 (strain E24377A / ETEC).